A 609-amino-acid chain; its full sequence is Dihydroxy-acid dehydratase (609 aa).

Mg(2+) is bound at residue Asp-81. Position 122 (Cys-122) interacts with [2Fe-2S] cluster. Residues Asp-123 and Lys-124 each contribute to the Mg(2+) site. N6-carboxylysine is present on Lys-124. A [2Fe-2S] cluster-binding site is contributed by Cys-195. Glu-491 is a binding site for Mg(2+). Ser-517 (proton acceptor) is an active-site residue.

This sequence belongs to the IlvD/Edd family. Homodimer. [2Fe-2S] cluster is required as a cofactor. Mg(2+) serves as cofactor.

The catalysed reaction is (2R)-2,3-dihydroxy-3-methylbutanoate = 3-methyl-2-oxobutanoate + H2O. It catalyses the reaction (2R,3R)-2,3-dihydroxy-3-methylpentanoate = (S)-3-methyl-2-oxopentanoate + H2O. The protein operates within amino-acid biosynthesis; L-isoleucine biosynthesis; L-isoleucine from 2-oxobutanoate: step 3/4. Its pathway is amino-acid biosynthesis; L-valine biosynthesis; L-valine from pyruvate: step 3/4. Its function is as follows. Functions in the biosynthesis of branched-chain amino acids. Catalyzes the dehydration of (2R,3R)-2,3-dihydroxy-3-methylpentanoate (2,3-dihydroxy-3-methylvalerate) into 2-oxo-3-methylpentanoate (2-oxo-3-methylvalerate) and of (2R)-2,3-dihydroxy-3-methylbutanoate (2,3-dihydroxyisovalerate) into 2-oxo-3-methylbutanoate (2-oxoisovalerate), the penultimate precursor to L-isoleucine and L-valine, respectively. The polypeptide is Dihydroxy-acid dehydratase (Acinetobacter baumannii (strain AB0057)).